Consider the following 199-residue polypeptide: Holliday junction branch migration complex subunit RuvA (199 aa).

Positions methionine 1–threonine 63 are domain I. The tract at residues aspartate 64 to threonine 142 is domain II. A flexible linker region spans residues threonine 143–alanine 149. A domain III region spans residues threonine 150–asparagine 199.

Belongs to the RuvA family. As to quaternary structure, homotetramer. Forms an RuvA(8)-RuvB(12)-Holliday junction (HJ) complex. HJ DNA is sandwiched between 2 RuvA tetramers; dsDNA enters through RuvA and exits via RuvB. An RuvB hexamer assembles on each DNA strand where it exits the tetramer. Each RuvB hexamer is contacted by two RuvA subunits (via domain III) on 2 adjacent RuvB subunits; this complex drives branch migration. In the full resolvosome a probable DNA-RuvA(4)-RuvB(12)-RuvC(2) complex forms which resolves the HJ.

Its subcellular location is the cytoplasm. In terms of biological role, the RuvA-RuvB-RuvC complex processes Holliday junction (HJ) DNA during genetic recombination and DNA repair, while the RuvA-RuvB complex plays an important role in the rescue of blocked DNA replication forks via replication fork reversal (RFR). RuvA specifically binds to HJ cruciform DNA, conferring on it an open structure. The RuvB hexamer acts as an ATP-dependent pump, pulling dsDNA into and through the RuvAB complex. HJ branch migration allows RuvC to scan DNA until it finds its consensus sequence, where it cleaves and resolves the cruciform DNA. This Limosilactobacillus reuteri subsp. reuteri (strain JCM 1112) (Lactobacillus reuteri) protein is Holliday junction branch migration complex subunit RuvA.